A 102-amino-acid chain; its full sequence is NADH-quinone oxidoreductase subunit K (102 aa).

Transmembrane regions (helical) follow at residues 6 to 26, 30 to 50, and 62 to 82; these read LEHG…GLMV, ILFV…AFIV, and VMFI…LAIL.

Belongs to the complex I subunit 4L family. As to quaternary structure, NDH-1 is composed of 13 different subunits. Subunits NuoA, H, J, K, L, M, N constitute the membrane sector of the complex.

It localises to the cell inner membrane. The enzyme catalyses a quinone + NADH + 5 H(+)(in) = a quinol + NAD(+) + 4 H(+)(out). NDH-1 shuttles electrons from NADH, via FMN and iron-sulfur (Fe-S) centers, to quinones in the respiratory chain. The immediate electron acceptor for the enzyme in this species is believed to be ubiquinone. Couples the redox reaction to proton translocation (for every two electrons transferred, four hydrogen ions are translocated across the cytoplasmic membrane), and thus conserves the redox energy in a proton gradient. This is NADH-quinone oxidoreductase subunit K from Pseudomonas fluorescens (strain SBW25).